Consider the following 322-residue polypeptide: Peroxidase 66 (322 aa).

Residues 1–24 (MAFSKGLIFAMIFAVLAIVKPSEA) form the signal peptide. 2 disulfide bridges follow: Cys35-Cys114 and Cys68-Cys73. The active-site Proton acceptor is the His66. Asp67, Gly72, Asp74, and Ser76 together coordinate Ca(2+). Asn155 carries an N-linked (GlcNAc...) asparagine glycan. Residue Pro161 coordinates substrate. A glycan (N-linked (GlcNAc...) asparagine) is linked at Asn166. His191 contacts heme b. Thr192 contacts Ca(2+). Cys198 and Cys230 are joined by a disulfide. Asn207 carries an N-linked (GlcNAc...) asparagine glycan. Ca(2+)-binding residues include Asp245, Thr247, and Asp252.

The protein belongs to the peroxidase family. Classical plant (class III) peroxidase subfamily. It depends on heme b as a cofactor. Requires Ca(2+) as cofactor.

The protein localises to the secreted. It catalyses the reaction 2 a phenolic donor + H2O2 = 2 a phenolic radical donor + 2 H2O. Removal of H(2)O(2), oxidation of toxic reductants, biosynthesis and degradation of lignin, suberization, auxin catabolism, response to environmental stresses such as wounding, pathogen attack and oxidative stress. These functions might be dependent on each isozyme/isoform in each plant tissue. This Arabidopsis thaliana (Mouse-ear cress) protein is Peroxidase 66 (PER66).